A 335-amino-acid polypeptide reads, in one-letter code: Glycerol-3-phosphate dehydrogenase [NAD(P)+] (335 aa).

Residues Trp-11, Arg-30, and Lys-106 each coordinate NADPH. Lys-106, Gly-135, and Ser-137 together coordinate sn-glycerol 3-phosphate. Residue Ala-139 coordinates NADPH. Sn-glycerol 3-phosphate contacts are provided by Lys-190, Asp-243, Ser-253, Arg-254, and Asn-255. The active-site Proton acceptor is Lys-190. Residue Arg-254 participates in NADPH binding. NADPH-binding residues include Val-278 and Glu-280.

This sequence belongs to the NAD-dependent glycerol-3-phosphate dehydrogenase family.

The protein localises to the cytoplasm. It catalyses the reaction sn-glycerol 3-phosphate + NAD(+) = dihydroxyacetone phosphate + NADH + H(+). The catalysed reaction is sn-glycerol 3-phosphate + NADP(+) = dihydroxyacetone phosphate + NADPH + H(+). The protein operates within membrane lipid metabolism; glycerophospholipid metabolism. Functionally, catalyzes the reduction of the glycolytic intermediate dihydroxyacetone phosphate (DHAP) to sn-glycerol 3-phosphate (G3P), the key precursor for phospholipid synthesis. In Paucimonas lemoignei (Pseudomonas lemoignei), this protein is Glycerol-3-phosphate dehydrogenase [NAD(P)+].